A 287-amino-acid chain; its full sequence is 4-hydroxybenzoate octaprenyltransferase (287 aa).

Helical transmembrane passes span 21 to 39, 95 to 115, 116 to 136, 138 to 158, 161 to 181, 213 to 233, 234 to 251, and 264 to 284; these read PIGT…WLAA, VLAL…TMNP, LTIG…FMKR, IPIP…MAYA, ANAL…WTIA, IIGA…QLSE, LGSS…LFVY, and CFQA…GVVI.

It belongs to the UbiA prenyltransferase family. Requires Mg(2+) as cofactor.

It localises to the cell inner membrane. The catalysed reaction is all-trans-octaprenyl diphosphate + 4-hydroxybenzoate = 4-hydroxy-3-(all-trans-octaprenyl)benzoate + diphosphate. Its pathway is cofactor biosynthesis; ubiquinone biosynthesis. Functionally, catalyzes the prenylation of para-hydroxybenzoate (PHB) with an all-trans polyprenyl group. Mediates the second step in the final reaction sequence of ubiquinone-8 (UQ-8) biosynthesis, which is the condensation of the polyisoprenoid side chain with PHB, generating the first membrane-bound Q intermediate 3-octaprenyl-4-hydroxybenzoate. This chain is 4-hydroxybenzoate octaprenyltransferase, found in Aeromonas hydrophila subsp. hydrophila (strain ATCC 7966 / DSM 30187 / BCRC 13018 / CCUG 14551 / JCM 1027 / KCTC 2358 / NCIMB 9240 / NCTC 8049).